The chain runs to 354 residues: Ferrochelatase (354 aa).

Fe cation contacts are provided by H214 and E295.

It belongs to the ferrochelatase family.

Its subcellular location is the cytoplasm. The enzyme catalyses heme b + 2 H(+) = protoporphyrin IX + Fe(2+). It participates in porphyrin-containing compound metabolism; protoheme biosynthesis; protoheme from protoporphyrin-IX: step 1/1. In terms of biological role, catalyzes the ferrous insertion into protoporphyrin IX. The sequence is that of Ferrochelatase from Burkholderia ambifaria (strain MC40-6).